A 358-amino-acid polypeptide reads, in one-letter code: tRNA-specific 2-thiouridylase MnmA (358 aa).

Residues 8–15 (GLSGGVDS) and leucine 34 each bind ATP. The Nucleophile role is filled by cysteine 95. A disulfide bridge links cysteine 95 with cysteine 194. Glycine 120 contacts ATP. The tract at residues 144 to 146 (KDQ) is interaction with tRNA. The active-site Cysteine persulfide intermediate is the cysteine 194. An interaction with tRNA region spans residues 299–300 (RY).

The protein belongs to the MnmA/TRMU family.

The protein localises to the cytoplasm. It carries out the reaction S-sulfanyl-L-cysteinyl-[protein] + uridine(34) in tRNA + AH2 + ATP = 2-thiouridine(34) in tRNA + L-cysteinyl-[protein] + A + AMP + diphosphate + H(+). Functionally, catalyzes the 2-thiolation of uridine at the wobble position (U34) of tRNA, leading to the formation of s(2)U34. This chain is tRNA-specific 2-thiouridylase MnmA, found in Synechocystis sp. (strain ATCC 27184 / PCC 6803 / Kazusa).